The chain runs to 185 residues: Peptidyl-tRNA hydrolase (185 aa).

Tyr14 provides a ligand contact to tRNA. His19 serves as the catalytic Proton acceptor. TRNA is bound by residues Tyr65, Asn67, and Asn113.

It belongs to the PTH family. In terms of assembly, monomer.

It localises to the cytoplasm. The enzyme catalyses an N-acyl-L-alpha-aminoacyl-tRNA + H2O = an N-acyl-L-amino acid + a tRNA + H(+). In terms of biological role, hydrolyzes ribosome-free peptidyl-tRNAs (with 1 or more amino acids incorporated), which drop off the ribosome during protein synthesis, or as a result of ribosome stalling. Catalyzes the release of premature peptidyl moieties from peptidyl-tRNA molecules trapped in stalled 50S ribosomal subunits, and thus maintains levels of free tRNAs and 50S ribosomes. The protein is Peptidyl-tRNA hydrolase of Rickettsia prowazekii (strain Madrid E).